The following is a 167-amino-acid chain: Large ribosomal subunit protein uL10 (167 aa).

The protein belongs to the universal ribosomal protein uL10 family. Part of the ribosomal stalk of the 50S ribosomal subunit. The N-terminus interacts with L11 and the large rRNA to form the base of the stalk. The C-terminus forms an elongated spine to which L12 dimers bind in a sequential fashion forming a multimeric L10(L12)X complex.

Its function is as follows. Forms part of the ribosomal stalk, playing a central role in the interaction of the ribosome with GTP-bound translation factors. The protein is Large ribosomal subunit protein uL10 of Cytophaga hutchinsonii (strain ATCC 33406 / DSM 1761 / CIP 103989 / NBRC 15051 / NCIMB 9469 / D465).